Consider the following 212-residue polypeptide: Ras-related protein Rab-17 (212 aa).

Position 29 is a phosphoserine (serine 29). 4 residues coordinate GTP: glycine 31, lysine 32, serine 33, and threonine 50. Serine 33, threonine 50, and aspartate 73 together coordinate Mg(2+). A Switch 1 motif is present at residues 43–54 (DFKSILPTVGCA). The short motif at 75-91 (AGQEKYHSVCHLYFRGA) is the Switch 2 element. Residues glycine 76, asparagine 132, lysine 133, aspartate 135, and alanine 163 each contribute to the GTP site. 2 S-geranylgeranyl cysteine lipidation sites follow: cysteine 209 and cysteine 210.

Belongs to the small GTPase superfamily. Rab family. Mg(2+) serves as cofactor. In terms of tissue distribution, expressed in melanocytes (at protein level).

Its subcellular location is the recycling endosome membrane. It localises to the melanosome. It is found in the cell projection. The protein resides in the dendrite. The catalysed reaction is GTP + H2O = GDP + phosphate + H(+). Regulated by guanine nucleotide exchange factors (GEFs) which promote the exchange of bound GDP for free GTP. Regulated by GTPase activating proteins (GAPs) which increase the GTP hydrolysis activity. Inhibited by GDP dissociation inhibitors (GDIs). Its function is as follows. The small GTPases Rab are key regulators of intracellular membrane trafficking, from the formation of transport vesicles to their fusion with membranes. Rabs cycle between an inactive GDP-bound form and an active GTP-bound form that is able to recruit to membranes different set of downstream effectors directly responsible for vesicle formation, movement, tethering and fusion. RAB17 is involved in transcytosis, the directed movement of endocytosed material through the cell and its exocytosis from the plasma membrane at the opposite side. Mainly observed in epithelial cells, transcytosis mediates for instance, the transcellular transport of immunoglobulins from the basolateral surface to the apical surface. Most probably controls membrane trafficking through apical recycling endosomes in a post-endocytic step of transcytosis. Required for melanosome transport and release from melanocytes, it also regulates dendrite and dendritic spine development. May also play a role in cell migration. The chain is Ras-related protein Rab-17 from Homo sapiens (Human).